We begin with the raw amino-acid sequence, 485 residues long: Putative E3 ubiquitin-protein ligase makorin-4 (485 aa).

Residues 1-32 are compositionally biased toward low complexity; sequence MAEAAAPGTTVTTSGAGAAAAEAAETAEAVSP. The tract at residues 1 to 63 is disordered; the sequence is MAEAAAPGTT…GSDGSGGRGD (63 aa). Positions 45-63 are enriched in gly residues; it reads AGGGVGGSDGSDGSGGRGD. 3 consecutive C3H1-type zinc fingers follow at residues 90–117, 124–146, and 243–270; these read WTKQVTCRYFKYGICKEGDNCRYSHDLS, VCKYFQRGCCVYGDRCRCEHSKP, and ETKKQLCPYAAVGQCRYGENCVYLHGDL. The tract at residues 271 to 298 is makorin-type Cys-His; sequence CDMCGLQVLHPMDAAQRSQHIQACIEAH. Residues 316–370 form an RING-type zinc finger; the sequence is CGICMEVVYEKANPNEHRFGILSNCNHTFCLKCIRKWRSAKEFESRIVKSCPQCR. Residues 399 to 428 form a C3H1-type 4 zinc finger; the sequence is AMSNKACKYFDEGRGSCPFGENCFYKHMYP.

The catalysed reaction is S-ubiquitinyl-[E2 ubiquitin-conjugating enzyme]-L-cysteine + [acceptor protein]-L-lysine = [E2 ubiquitin-conjugating enzyme]-L-cysteine + N(6)-ubiquitinyl-[acceptor protein]-L-lysine.. It functions in the pathway protein modification; protein ubiquitination. In terms of biological role, may act as a E3 ubiquitin ligase catalyzing the covalent attachment of ubiquitin moieties onto substrate proteins. This is Putative E3 ubiquitin-protein ligase makorin-4 (MKRN4P) from Homo sapiens (Human).